The following is a 1096-amino-acid chain: Carbamoyl phosphate synthase large chain (1096 aa).

Residues 1–402 form a carboxyphosphate synthetic domain region; the sequence is MPKRDDINSV…ALQKALRSLE (402 aa). 12 residues coordinate ATP: Arg-129, Arg-169, Gly-175, Gly-176, Glu-208, Ile-210, Glu-215, Gly-241, Val-242, His-243, Gln-285, and Glu-299. The region spanning 133 to 328 is the ATP-grasp 1 domain; sequence KDLVIESGAD…IAKIAAKLAI (196 aa). 3 residues coordinate Mg(2+): Gln-285, Glu-299, and Asn-301. Mn(2+) is bound by residues Gln-285, Glu-299, and Asn-301. Residues 403-547 are oligomerization domain; the sequence is KRGSSFHWGA…YSSYDSETEI (145 aa). Residues 548–950 are carbamoyl phosphate synthetic domain; the sequence is VPSDRRKVII…AFAKSQEAAF (403 aa). An ATP-grasp 2 domain is found at 676-870; that stretch reads SGILDAAGLV…LAKAASLVMV (195 aa). Residues Arg-712, Arg-754, Leu-756, Glu-761, Gly-786, Ile-787, His-788, Ser-789, Gln-829, and Glu-841 each coordinate ATP. Gln-829, Glu-841, and Asn-843 together coordinate Mg(2+). 3 residues coordinate Mn(2+): Gln-829, Glu-841, and Asn-843. One can recognise an MGS-like domain in the interval 951–1095; it reads GGLPLSGTVF…QDYAIAREAR (145 aa). The tract at residues 951–1096 is allosteric domain; it reads GGLPLSGTVF…DYAIAREARR (146 aa).

The protein belongs to the CarB family. As to quaternary structure, composed of two chains; the small (or glutamine) chain promotes the hydrolysis of glutamine to ammonia, which is used by the large (or ammonia) chain to synthesize carbamoyl phosphate. Tetramer of heterodimers (alpha,beta)4. Mg(2+) is required as a cofactor. Requires Mn(2+) as cofactor.

The catalysed reaction is hydrogencarbonate + L-glutamine + 2 ATP + H2O = carbamoyl phosphate + L-glutamate + 2 ADP + phosphate + 2 H(+). It carries out the reaction hydrogencarbonate + NH4(+) + 2 ATP = carbamoyl phosphate + 2 ADP + phosphate + 2 H(+). It functions in the pathway amino-acid biosynthesis; L-arginine biosynthesis; carbamoyl phosphate from bicarbonate: step 1/1. It participates in pyrimidine metabolism; UMP biosynthesis via de novo pathway; (S)-dihydroorotate from bicarbonate: step 1/3. In terms of biological role, large subunit of the glutamine-dependent carbamoyl phosphate synthetase (CPSase). CPSase catalyzes the formation of carbamoyl phosphate from the ammonia moiety of glutamine, carbonate, and phosphate donated by ATP, constituting the first step of 2 biosynthetic pathways, one leading to arginine and/or urea and the other to pyrimidine nucleotides. The large subunit (synthetase) binds the substrates ammonia (free or transferred from glutamine from the small subunit), hydrogencarbonate and ATP and carries out an ATP-coupled ligase reaction, activating hydrogencarbonate by forming carboxy phosphate which reacts with ammonia to form carbamoyl phosphate. This Clavibacter sepedonicus (Clavibacter michiganensis subsp. sepedonicus) protein is Carbamoyl phosphate synthase large chain.